Consider the following 344-residue polypeptide: Phosphate acyltransferase (344 aa).

It belongs to the PlsX family. Homodimer. Probably interacts with PlsY.

The protein localises to the cytoplasm. It carries out the reaction a fatty acyl-[ACP] + phosphate = an acyl phosphate + holo-[ACP]. It participates in lipid metabolism; phospholipid metabolism. Functionally, catalyzes the reversible formation of acyl-phosphate (acyl-PO(4)) from acyl-[acyl-carrier-protein] (acyl-ACP). This enzyme utilizes acyl-ACP as fatty acyl donor, but not acyl-CoA. This is Phosphate acyltransferase from Erwinia tasmaniensis (strain DSM 17950 / CFBP 7177 / CIP 109463 / NCPPB 4357 / Et1/99).